An 826-amino-acid chain; its full sequence is MVTGDKESSLMKKRNKRSHKRKREEDFERIDSLPWSSSIPIGEDDEGESFSTLFSGSGQLDGGFLSLEEIDEADYHLTLPTIESEITERKQSPEDDDDTNETVDEMIEGEEAEEDGEGRDDEDDEDDEETRKKKEKKAKRNKEKKKEKKKKKQKKINEAAKNQDASAVSCDGDDTVEEQVEEEEIPPEFSAWSSMRLHPLLMKSIYRLDFKEPTKIQKACFNVAAYQGKDVIGAAETGSGKTLAFGLPILQRLLDEREKVGKLYALKGEEAQKYAADGYLRALIITPTRELALQVTEHLENAAKNLSVKVVPIVGGMFSEKQERRLKEKPEIVVATPGRLWELMSAGEKHLVELHSLSFFVLDEADRMVERGHFRELQSILDLLPVTDKPNEGKTQTVKSNDTVLNVPKKKRQTFVFSATIALSSDFRKKLKRGSSKSKQSSSGEVNSIEVLSERAGMRDNVAIIDLTTTSILAPKIEESFIKCEEKEKDAYLYYILSVHGQGRTIVFCTSVTDLRHISGLLKILGLDVCTLFSEMKQRARLKSIDRFRASENGILIATDLVARGIDIKNVRTIIHYKLPHSAEVYVHRCGRTARAFADGCSIALIEPNETSKFYTLCKSFSMESVKIFPLDNSYMPAVRKRLYLARQIYEIERKGSRENADRTWLKKHAESMELELDDEESEEERVDNVRQRKATSARLNKLKEELSTLLSHPMQPKKFSGRYFAGVGVSTLMQNQFVELKKQKQAQMQIGGDIKRRKLVVINQNCIEPLQALRAGGNEMLKMKGQSAEKRRDIASLKKKRKEEKIGRRDQRRNQKKQRKLMASS.

Residues 1 to 10 (MVTGDKESSL) show a composition bias toward basic and acidic residues. Disordered stretches follow at residues 1–62 (MVTG…QLDG) and 76–175 (HLTL…GDDT). Residues 11-22 (MKKRNKRSHKRK) show a composition bias toward basic residues. Residues 49–58 (SFSTLFSGSG) show a composition bias toward polar residues. Over residues 94-128 (EDDDDTNETVDEMIEGEEAEEDGEGRDDEDDEDDE) the composition is skewed to acidic residues. Positions 125 to 166 (EDDEETRKKKEKKAKRNKEKKKEKKKKKQKKINEAAKNQDAS) form a coiled coil. Basic residues predominate over residues 133–154 (KKEKKAKRNKEKKKEKKKKKQK). Residues 190-218 (SAWSSMRLHPLLMKSIYRLDFKEPTKIQK) carry the Q motif motif. The 218-residue stretch at 222–439 (NVAAYQGKDV…KLKRGSSKSK (218 aa)) folds into the Helicase ATP-binding domain. 235 to 242 (AETGSGKT) is an ATP binding site. Residues 363–366 (DEAD) carry the DEAD box motif. Residues 476–644 (KIEESFIKCE…YMPAVRKRLY (169 aa)) enclose the Helicase C-terminal domain. Coiled coils occupy residues 666 to 712 (LKKH…TLLS) and 783 to 810 (KMKG…IGRR). The segment at 783 to 826 (KMKGQSAEKRRDIASLKKKRKEEKIGRRDQRRNQKKQRKLMASS) is disordered. Composition is skewed to basic and acidic residues over residues 788-797 (SAEKRRDIAS) and 804-814 (EEKIGRRDQRR). A compositionally biased stretch (basic residues) spans 815–826 (NQKKQRKLMASS).

The protein belongs to the DEAD box helicase family. DDX24/MAK5 subfamily.

It catalyses the reaction ATP + H2O = ADP + phosphate + H(+). The sequence is that of DEAD-box ATP-dependent RNA helicase 13 (RH13) from Arabidopsis thaliana (Mouse-ear cress).